Consider the following 66-residue polypeptide: Ocellatin-PT3 (66 aa).

The first 22 residues, 1 to 22, serve as a signal peptide directing secretion; sequence MAFLKKSLFLVLFLGLVSLSIC. The propeptide occupies 23-39; the sequence is DEEKRQDEDDDDDDDEE. Val66 carries the valine amide modification.

Expressed by the skin glands.

It localises to the secreted. Functionally, has antibacterial activity against Gram-negative bacterium E.coli ATCC 25922 (MIC=320 uM) but not against S.pneumoniae ATCC 700603, S.choleraesuis ATCC 14028 or Gram-positive bacterium S.aureus ATCC 29313. Shows no hemolytic activity and no cytotoxicity. In Leptodactylus pustulatus (Ceara white-lipped frog), this protein is Ocellatin-PT3.